The chain runs to 109 residues: Large ribosomal subunit protein uL22 (109 aa).

This sequence belongs to the universal ribosomal protein uL22 family. Part of the 50S ribosomal subunit.

Its function is as follows. This protein binds specifically to 23S rRNA; its binding is stimulated by other ribosomal proteins, e.g. L4, L17, and L20. It is important during the early stages of 50S assembly. It makes multiple contacts with different domains of the 23S rRNA in the assembled 50S subunit and ribosome. The globular domain of the protein is located near the polypeptide exit tunnel on the outside of the subunit, while an extended beta-hairpin is found that lines the wall of the exit tunnel in the center of the 70S ribosome. In Herminiimonas arsenicoxydans, this protein is Large ribosomal subunit protein uL22.